The sequence spans 287 residues: Beta-lactamase GES-5 (287 aa).

Residues 1 to 18 (MRFIHALLLAGIAHSAYA) form the signal peptide. C63 and C233 form a disulfide bridge. S64 (nucleophile; acyl-ester intermediate) is an active-site residue. Imipenem is bound by residues S64, S125, N127, T230, T232, and R238.

The protein belongs to the class-A beta-lactamase family.

It localises to the secreted. The catalysed reaction is a beta-lactam + H2O = a substituted beta-amino acid. With respect to regulation, inhibited by the beta-lactamase-blocking agents clavulanic acid, sulbactam and tazobactam, via a covalent binding to Ser-64. Functionally, confers resistance to penicillins, cephalosporins and carbapenems. Has carbapenem-hydrolyzing activity. The sequence is that of Beta-lactamase GES-5 from Klebsiella pneumoniae.